The chain runs to 465 residues: UDP-N-acetylmuramoylalanine--D-glutamate ligase (465 aa).

112 to 118 (GTDGKTT) is a binding site for ATP.

Belongs to the MurCDEF family.

Its subcellular location is the cytoplasm. The enzyme catalyses UDP-N-acetyl-alpha-D-muramoyl-L-alanine + D-glutamate + ATP = UDP-N-acetyl-alpha-D-muramoyl-L-alanyl-D-glutamate + ADP + phosphate + H(+). The protein operates within cell wall biogenesis; peptidoglycan biosynthesis. In terms of biological role, cell wall formation. Catalyzes the addition of glutamate to the nucleotide precursor UDP-N-acetylmuramoyl-L-alanine (UMA). The sequence is that of UDP-N-acetylmuramoylalanine--D-glutamate ligase from Chlorobium limicola (strain DSM 245 / NBRC 103803 / 6330).